The primary structure comprises 425 residues: Serine/threonine-protein kinase VRK1 (425 aa).

The 292-residue stretch at 38–329 folds into the Protein kinase domain; sequence WKLGSAVGQG…KLRGILQQGL (292 aa). Residues 44–52 and K72 each bind ATP; that span reads VGQGGFGLL. The Proton acceptor role is filled by D178. The interval 343-425 is disordered; it reads GVATNSTSLP…KSRGRPKKNS (83 aa). The segment covering 415-425 has biased composition (basic residues); that stretch reads KKSRGRPKKNS.

It belongs to the protein kinase superfamily. CK1 Ser/Thr protein kinase family. VRK subfamily.

It localises to the nucleus. The protein resides in the cytoplasm. The protein localises to the cajal body. It carries out the reaction L-seryl-[protein] + ATP = O-phospho-L-seryl-[protein] + ADP + H(+). The enzyme catalyses L-threonyl-[protein] + ATP = O-phospho-L-threonyl-[protein] + ADP + H(+). Functionally, serine/threonine kinase involved in the regulation of key cellular processes including the cell cycle, nuclear condensation, transcription regulation, and DNA damage response. Controls chromatin organization and remodeling by mediating phosphorylation of histone H3 on 'Thr-4' and histone H2AX (H2aXT4ph). It also phosphorylates KAT5 in response to DNA damage, promoting KAT5 association with chromatin and histone acetyltransferase activity. Is involved in the regulation of cell cycle progression of neural progenitors, and is required for proper cortical neuronal migration. Is involved in neurite elongation and branching in motor neurons, and has an essential role in Cajal bodies assembly, acting through COIL phosphorylation and the control of coilin degradation. Involved in Golgi disassembly during the cell cycle: following phosphorylation by PLK3 during mitosis, it is required to induce Golgi fragmentation. Phosphorylates BANF1: disrupts its ability to bind DNA, reduces its binding to LEM domain-containing proteins and causes its relocalization from the nucleus to the cytoplasm. Phosphorylates TP53BP1 and p53/TP53 on 'Thr-18', preventing the interaction between p53/TP53 and MDM2. Phosphorylates ATF2 which activates its transcriptional activity. Phosphorylates JUN. The chain is Serine/threonine-protein kinase VRK1 (vrk1) from Danio rerio (Zebrafish).